Reading from the N-terminus, the 188-residue chain is dCTP deaminase (188 aa).

DCTP-binding positions include 111–116 (KSTYAR), 135–137 (TLE), Gln156, Tyr170, and Gln180. Glu137 acts as the Proton donor/acceptor in catalysis.

It belongs to the dCTP deaminase family. In terms of assembly, homotrimer.

The catalysed reaction is dCTP + H2O + H(+) = dUTP + NH4(+). It functions in the pathway pyrimidine metabolism; dUMP biosynthesis; dUMP from dCTP (dUTP route): step 1/2. Catalyzes the deamination of dCTP to dUTP. The polypeptide is dCTP deaminase (Francisella tularensis subsp. tularensis (strain FSC 198)).